We begin with the raw amino-acid sequence, 441 residues long: Homogentisate 1,2-dioxygenase (441 aa).

The active-site Proton acceptor is the H297. Positions 340 and 346 each coordinate Fe cation. Residues Y355 and H376 each contribute to the homogentisate site. H376 contacts Fe cation.

This sequence belongs to the homogentisate dioxygenase family. As to quaternary structure, hexamer; dimer of trimers. Requires Fe cation as cofactor.

It carries out the reaction homogentisate + O2 = 4-maleylacetoacetate + H(+). The protein operates within amino-acid degradation; L-phenylalanine degradation; acetoacetate and fumarate from L-phenylalanine: step 4/6. Involved in the catabolism of homogentisate (2,5-dihydroxyphenylacetate or 2,5-OH-PhAc), a central intermediate in the degradation of phenylalanine and tyrosine. Catalyzes the oxidative ring cleavage of the aromatic ring of homogentisate to yield maleylacetoacetate. This is Homogentisate 1,2-dioxygenase from Streptomyces coelicolor (strain ATCC BAA-471 / A3(2) / M145).